An 838-amino-acid chain; its full sequence is 1,4-alpha-glucan branching enzyme GlgB 1 (838 aa).

A compositionally biased stretch (basic and acidic residues) spans 1–11 (MIPRPPSDDRA). Disordered regions lie at residues 1–98 (MIPR…VSKK) and 116–142 (PVSP…SVLG). Low complexity predominate over residues 29–57 (KKAAAAKKTAGKKATPAAKATAAKGAVTK). Asp513 functions as the Nucleophile in the catalytic mechanism. Glu566 acts as the Proton donor in catalysis. The tract at residues 793–822 (TDGARYGGSDVTNPHPVKPEPQGRHGRPAS) is disordered.

Belongs to the glycosyl hydrolase 13 family. GlgB subfamily. Monomer.

It carries out the reaction Transfers a segment of a (1-&gt;4)-alpha-D-glucan chain to a primary hydroxy group in a similar glucan chain.. The protein operates within glycan biosynthesis; glycogen biosynthesis. In terms of biological role, catalyzes the formation of the alpha-1,6-glucosidic linkages in glycogen by scission of a 1,4-alpha-linked oligosaccharide from growing alpha-1,4-glucan chains and the subsequent attachment of the oligosaccharide to the alpha-1,6 position. The protein is 1,4-alpha-glucan branching enzyme GlgB 1 of Streptomyces avermitilis (strain ATCC 31267 / DSM 46492 / JCM 5070 / NBRC 14893 / NCIMB 12804 / NRRL 8165 / MA-4680).